The primary structure comprises 239 residues: Pyridoxine 5'-phosphate synthase (239 aa).

Residue asparagine 7 coordinates 3-amino-2-oxopropyl phosphate. Residue 9 to 10 (DH) participates in 1-deoxy-D-xylulose 5-phosphate binding. Arginine 18 lines the 3-amino-2-oxopropyl phosphate pocket. Residue histidine 43 is the Proton acceptor of the active site. 1-deoxy-D-xylulose 5-phosphate is bound by residues arginine 45 and histidine 50. The active-site Proton acceptor is the glutamate 70. Threonine 100 is a 1-deoxy-D-xylulose 5-phosphate binding site. The Proton donor role is filled by histidine 191. 3-amino-2-oxopropyl phosphate-binding positions include glycine 192 and 213-214 (GH).

It belongs to the PNP synthase family. In terms of assembly, homooctamer; tetramer of dimers.

It is found in the cytoplasm. The catalysed reaction is 3-amino-2-oxopropyl phosphate + 1-deoxy-D-xylulose 5-phosphate = pyridoxine 5'-phosphate + phosphate + 2 H2O + H(+). It participates in cofactor biosynthesis; pyridoxine 5'-phosphate biosynthesis; pyridoxine 5'-phosphate from D-erythrose 4-phosphate: step 5/5. Its function is as follows. Catalyzes the complicated ring closure reaction between the two acyclic compounds 1-deoxy-D-xylulose-5-phosphate (DXP) and 3-amino-2-oxopropyl phosphate (1-amino-acetone-3-phosphate or AAP) to form pyridoxine 5'-phosphate (PNP) and inorganic phosphate. This Citrifermentans bemidjiense (strain ATCC BAA-1014 / DSM 16622 / JCM 12645 / Bem) (Geobacter bemidjiensis) protein is Pyridoxine 5'-phosphate synthase.